The sequence spans 209 residues: Kynurenine formamidase (209 aa).

Trp20 is a substrate binding site. Zn(2+) is bound by residues His50, His54, and Asp56. His60 acts as the Proton donor/acceptor in catalysis. His161 and Glu173 together coordinate Zn(2+).

Belongs to the Cyclase 1 superfamily. KynB family. As to quaternary structure, homodimer. The cofactor is Zn(2+).

The catalysed reaction is N-formyl-L-kynurenine + H2O = L-kynurenine + formate + H(+). It functions in the pathway amino-acid degradation; L-tryptophan degradation via kynurenine pathway; L-kynurenine from L-tryptophan: step 2/2. In terms of biological role, catalyzes the hydrolysis of N-formyl-L-kynurenine to L-kynurenine, the second step in the kynurenine pathway of tryptophan degradation. The sequence is that of Kynurenine formamidase from Bacillus cereus (strain ZK / E33L).